Here is a 108-residue protein sequence, read N- to C-terminus: Translation initiation factor 1A (108 aa).

Positions 11 to 85 (PSKDVPKPEE…TKADIVYRYM (75 aa)) constitute an S1-like domain.

It belongs to the eIF-1A family.

In terms of biological role, seems to be required for maximal rate of protein biosynthesis. Enhances ribosome dissociation into subunits and stabilizes the binding of the initiator Met-tRNA(I) to 40 S ribosomal subunits. This is Translation initiation factor 1A (eIF1A) from Metallosphaera sedula (strain ATCC 51363 / DSM 5348 / JCM 9185 / NBRC 15509 / TH2).